The sequence spans 485 residues: Aspartyl/glutamyl-tRNA(Asn/Gln) amidotransferase subunit B (485 aa).

The protein belongs to the GatB/GatE family. GatB subfamily. Heterotrimer of A, B and C subunits.

It catalyses the reaction L-glutamyl-tRNA(Gln) + L-glutamine + ATP + H2O = L-glutaminyl-tRNA(Gln) + L-glutamate + ADP + phosphate + H(+). The catalysed reaction is L-aspartyl-tRNA(Asn) + L-glutamine + ATP + H2O = L-asparaginyl-tRNA(Asn) + L-glutamate + ADP + phosphate + 2 H(+). Functionally, allows the formation of correctly charged Asn-tRNA(Asn) or Gln-tRNA(Gln) through the transamidation of misacylated Asp-tRNA(Asn) or Glu-tRNA(Gln) in organisms which lack either or both of asparaginyl-tRNA or glutaminyl-tRNA synthetases. The reaction takes place in the presence of glutamine and ATP through an activated phospho-Asp-tRNA(Asn) or phospho-Glu-tRNA(Gln). This Ruminiclostridium cellulolyticum (strain ATCC 35319 / DSM 5812 / JCM 6584 / H10) (Clostridium cellulolyticum) protein is Aspartyl/glutamyl-tRNA(Asn/Gln) amidotransferase subunit B.